The sequence spans 290 residues: Endonuclease 2 (290 aa).

The N-terminal stretch at 1–27 is a signal peptide; the sequence is MANQKGLHVVMMIITVWLLYAAPNIHG. The a divalent metal cation site is built by W28 and H33. 28–33 is a binding site for substrate; it reads WGKEGH. A disulfide bridge connects residues C37 and C68. Positions 72 and 85 each coordinate a divalent metal cation. Substrate contacts are provided by residues 72-76, 85-88, and 94-99; these read DRVKF, HYIN, and SYQYNR. 3 disulfide bridges follow: C93–C245, C101–C111, and C226–C232. Positions 118 and 136 each coordinate substrate. A glycan (N-linked (GlcNAc...) asparagine) is linked at N118. The N-linked (GlcNAc...) asparagine glycan is linked to N137. Residues H147, D151, H157, H181, and D185 each coordinate a divalent metal cation. The tract at residues 147–196 is substrate binding; sequence HFMGDIHQPLHVSYASDKGGNTIEVHWYTRKANLHHIWDSNIIETAEADL. N-linked (GlcNAc...) asparagine glycosylation is present at N211. Residues 283 to 290 constitute a propeptide, removed in mature form; it reads ATLNRIFG.

Belongs to the nuclease type I family. As to quaternary structure, monomer. Mn(2+) is required as a cofactor. Requires Ca(2+) as cofactor. It depends on Zn(2+) as a cofactor. Post-translationally, N-glycosylation is required for enzymatic stability and activity.

It carries out the reaction Endonucleolytic cleavage to 5'-phosphomononucleotide and 5'-phosphooligonucleotide end-products.. With respect to regulation, ssDNase activity is inhibited by the divalent cation chelator EDTA and the reducing agent DTT. Divalent metal ions (e.g. Ca(2+), Mg(2+) and Zn(2+)) and DTT represses RNase activity. RNase activity is enhanced by EDTA. Also repressed by vanadate (VO(4)(3-)) and phosphate (PO(4)(3-)) by occupying the active site. Its function is as follows. Endonuclease mostly active on RNA and ssDNA, and to a lower extent, on dsDNA. Can cleave mismatch regions in heteroduplex DNA containing single base pair mismatches or insertion/deletion bases. In contradiction with PubMed:22506810, cannot hydrolyze single-stranded DNA and does not cleave mismatches. This Arabidopsis thaliana (Mouse-ear cress) protein is Endonuclease 2.